The sequence spans 472 residues: Cysteine--tRNA ligase (472 aa).

Residue Cys-28 participates in Zn(2+) binding. The short motif at 30-40 is the 'HIGH' region element; it reads PTVYDYTHIGH. Zn(2+) is bound by residues Cys-207, His-232, and Glu-236. The 'KMSKS' region signature appears at 264-268; sequence KMSKS. Residue Lys-267 coordinates ATP.

This sequence belongs to the class-I aminoacyl-tRNA synthetase family. Requires Zn(2+) as cofactor.

The protein localises to the cytoplasm. It catalyses the reaction tRNA(Cys) + L-cysteine + ATP = L-cysteinyl-tRNA(Cys) + AMP + diphosphate. The protein is Cysteine--tRNA ligase (cysS) of Aeropyrum pernix (strain ATCC 700893 / DSM 11879 / JCM 9820 / NBRC 100138 / K1).